Reading from the N-terminus, the 270-residue chain is Vegetative storage protein 1 (270 aa).

The first 17 residues, 1 to 17 (MKILSLSLLLLLAATVS), serve as a signal peptide directing secretion. 2 N-linked (GlcNAc...) asparagine glycosylation sites follow: asparagine 115 and asparagine 215.

It belongs to the APS1/VSP family. In terms of tissue distribution, expressed in leaves and in gynoecia, especially in styles, the basal and distal ends of ovaries and in siliques.

May function as somatic storage protein during early seedling development. The protein is Vegetative storage protein 1 (VSP1) of Arabidopsis thaliana (Mouse-ear cress).